Reading from the N-terminus, the 315-residue chain is Ribose-phosphate pyrophosphokinase (315 aa).

Residues 37–39 (DGE) and 96–97 (RQ) contribute to the ATP site. Mg(2+) is bound by residues His131 and Asp170. Residue Lys194 is part of the active site. D-ribose 5-phosphate-binding positions include Arg196, Asp220, and 224 to 228 (DTGGT).

Belongs to the ribose-phosphate pyrophosphokinase family. Class I subfamily. In terms of assembly, homohexamer. It depends on Mg(2+) as a cofactor.

It is found in the cytoplasm. It carries out the reaction D-ribose 5-phosphate + ATP = 5-phospho-alpha-D-ribose 1-diphosphate + AMP + H(+). It functions in the pathway metabolic intermediate biosynthesis; 5-phospho-alpha-D-ribose 1-diphosphate biosynthesis; 5-phospho-alpha-D-ribose 1-diphosphate from D-ribose 5-phosphate (route I): step 1/1. Functionally, involved in the biosynthesis of the central metabolite phospho-alpha-D-ribosyl-1-pyrophosphate (PRPP) via the transfer of pyrophosphoryl group from ATP to 1-hydroxyl of ribose-5-phosphate (Rib-5-P). This chain is Ribose-phosphate pyrophosphokinase, found in Buchnera aphidicola subsp. Acyrthosiphon pisum (strain APS) (Acyrthosiphon pisum symbiotic bacterium).